The primary structure comprises 64 residues: LTCKTCPFTTCPNSESCPGGQSICYQRKWEEHHGERIERRCVANCPAFGSHDTSLLCCTRDNCN.

5 cysteine pairs are disulfide-bonded: cysteine 3/cysteine 24, cysteine 6/cysteine 11, cysteine 17/cysteine 41, cysteine 45/cysteine 57, and cysteine 58/cysteine 63.

Belongs to the three-finger toxin family. Ancestral subfamily. Expressed by the venom gland.

The protein resides in the secreted. Its function is as follows. Allosteric modulator of the GABA(A) receptor (GABR), possibly increasing receptor affinity for the agonist, thus enhancing receptor opening and macroscopic desensitization. In vivo, intracerebroventricular injection into mice results in periods of reduced basal activity, followed by bursts of intense seizures and death. This is Micrurotoxin 2 from Micrurus mipartitus (Red-tailed coral snake).